The sequence spans 128 residues: MRNRKLGIDYSSDDFEGCPVETTLDIIGGKWKGILLYHLIDGKKRFNEFRKLYPKITQRMLTLQLRELERDGVIHREVYKQVPPKVEYSLTEFGRTLEPVILHMKDWGEKYKDRIDKLEAARKAEDKI.

The 99-residue stretch at 18–116 folds into the HTH hxlR-type domain; that stretch reads CPVETTLDII…WGEKYKDRID (99 aa).

This is an uncharacterized protein from Bacillus subtilis (strain 168).